Here is a 64-residue protein sequence, read N- to C-terminus: Large ribosomal subunit protein bL35 (64 aa).

The segment covering 1–28 has biased composition (basic residues); the sequence is MPKMKTKSGAAKRFKKTAGGLKHKHAFK. The disordered stretch occupies residues 1–64; it reads MPKMKTKSGA…ARVERSLRLR (64 aa). The span at 53 to 64 shows a compositional bias: basic and acidic residues; that stretch reads DVARVERSLRLR.

The protein belongs to the bacterial ribosomal protein bL35 family.

The sequence is that of Large ribosomal subunit protein bL35 from Pseudomonas aeruginosa (strain LESB58).